We begin with the raw amino-acid sequence, 135 residues long: Galectin-1 (135 aa).

An N-acetylalanine modification is found at A2. A Galectin domain is found at 4-135 (GLVASNLNLK…DFKIKCVAFE (132 aa)). Residues K13 and K29 each carry the N6-acetyllysine modification. The residue at position 30 (S30) is a Phosphoserine. A beta-D-galactoside contacts are provided by residues 45-49 (HFNPR), H53, N62, and 69-72 (WGAE). K108 is subject to N6-acetyllysine; alternate. N6-succinyllysine; alternate is present on K108. Residue K128 is modified to N6-acetyllysine.

Homodimer. Binds LGALS3BP. Interacts with CD2, CD3, CD4, CD6, CD7, CD43, ALCAM and CD45. Interacts with laminin (via poly-N-acetyllactosamine). Interacts with SUSD2. Interacts with cargo receptor TMED10; the interaction mediates the translocation from the cytoplasm into the ERGIC (endoplasmic reticulum-Golgi intermediate compartment) and thereby secretion.

The protein localises to the secreted. It is found in the extracellular space. Its subcellular location is the extracellular matrix. The protein resides in the cytoplasm. In terms of biological role, lectin that binds beta-galactoside and a wide array of complex carbohydrates. Plays a role in regulating apoptosis, cell proliferation and cell differentiation. Inhibits CD45 protein phosphatase activity and therefore the dephosphorylation of Lyn kinase. Strong inducer of T-cell apoptosis. Has hemagglutinating activity towards human erythrocytes. The sequence is that of Galectin-1 from Capra hircus (Goat).